The sequence spans 182 residues: MALNPTHLLWLDMEMTGLSPESDRIIELAIVVTDADLNTVAEGPVLVVHQPDAVMDAMDSWNRGTHGKSGLIDRVKASQLSESDAEAQMLEFVKQHVSPRTSPMCGNSICQDRRFMARHMPELEAFFHYRNLDVSTLKELAKRWRPGLCDAFKKSNKHEALADIYESIDELRYYREHFIRAE.

Positions 8–171 (LLWLDMEMTG…ADIYESIDEL (164 aa)) constitute an Exonuclease domain. Residue Tyr129 is part of the active site.

The protein belongs to the oligoribonuclease family.

It localises to the cytoplasm. Functionally, 3'-to-5' exoribonuclease specific for small oligoribonucleotides. This Thiobacillus denitrificans (strain ATCC 25259 / T1) protein is Oligoribonuclease.